The sequence spans 490 residues: Tryptophan decarboxylase (490 aa).

The residue at position 306 (lysine 306) is an N6-(pyridoxal phosphate)lysine.

This sequence belongs to the group II decarboxylase family. As to quaternary structure, homodimer. Pyridoxal 5'-phosphate is required as a cofactor.

It is found in the cytoplasm. The enzyme catalyses L-tryptophan + H(+) = tryptamine + CO2. With respect to regulation, inhibited by (S)-alpha-fluoromethyltryptophan. In terms of biological role, catalyzes the decarboxylation of tryptophan to tryptamine. Tryptamine is a neurotransmitter that induces the release of serotonin, which is suggested to modulate gastrointestinal motility. Therefore, the tryptophan decarboxylase from the gut bacteria Ruminococcus gnavus (strain ATCC 29149 / VPI C7-9) may influence host brain and behavior. Has weak activity with tyrosine and phenylalanine. The sequence is that of Tryptophan decarboxylase from Mediterraneibacter gnavus (strain ATCC 29149 / DSM 114966 / JCM 6515 / VPI C7-9) (Ruminococcus gnavus).